Reading from the N-terminus, the 402-residue chain is S-adenosylmethionine synthase (402 aa).

Position 137–142 (137–142 (GQGSAD)) interacts with ATP.

Belongs to the AdoMet synthase 2 family. The cofactor is Mg(2+).

The enzyme catalyses L-methionine + ATP + H2O = S-adenosyl-L-methionine + phosphate + diphosphate. It participates in amino-acid biosynthesis; S-adenosyl-L-methionine biosynthesis; S-adenosyl-L-methionine from L-methionine: step 1/1. Functionally, catalyzes the formation of S-adenosylmethionine from methionine and ATP. This chain is S-adenosylmethionine synthase, found in Pyrobaculum neutrophilum (strain DSM 2338 / JCM 9278 / NBRC 100436 / V24Sta) (Thermoproteus neutrophilus).